The following is a 488-amino-acid chain: HSPB1-associated protein 1 (488 aa).

Residues 88 to 208 (ETTCNYVEAT…EDTPFLYPTR (121 aa)) are interaction with HSPB1. The region spanning 124–288 (WAYADYKYFV…HLARVEEAIT (165 aa)) is the JmjC domain. The span at 369–379 (QTGSQNLTTGT) shows a compositional bias: polar residues. A disordered region spans residues 369–415 (QTGSQNLTTGTDKPEAASPFGPDLVPVAQRSEEPPSERGGIFGSDGK).

In terms of assembly, interacts with CRYAB and HSPB1. As to expression, widely expressed.

It is found in the cytoplasm. May play a role in cellular stress response. This is HSPB1-associated protein 1 (HSPBAP1) from Homo sapiens (Human).